The sequence spans 101 residues: MSEKCKKDDWVEIHYVVLEARERTGDIPEDTRKVPLECWIKGWAEKEGTVGEEVTIRTPANRYVKGTLTRINPEYTHTFGPCASELSAIGQELRATLKEGK.

The protein belongs to the OrtA family. As to quaternary structure, heterodimer with OrtB.

It catalyses the reaction D-alanine + acetyl-CoA = (2R)-2-amino-4-oxopentanoate + CoA. Its function is as follows. Involved in the ornithine fermentation pathway. Catalyzes the thiolytic cleavage of 2-amino-4-ketopentanoate (AKP) with coenzyme A (CoA) to form acetyl-CoA and alanine. It is strictly specific for AKP. The sequence is that of 2-amino-4-ketopentanoate thiolase alpha subunit from Unknown prokaryotic organism.